A 422-amino-acid polypeptide reads, in one-letter code: MDVFSFGQGNNTTASQEPFGTGGNVTSISDVTFSYQVITSLLLGTLIFCAVLGNACVVAAIALERSLQNVANYLIGSLAVTDLMVSVLVLPMAALYQVLNKWTLGQVTCDLFIALDVLCCTSSILHLCAIALDRYWAITDPIDYVNKRTPRRAAALISLTWLIGFLISIPPMLGWRTPEDRSDPDACTISKDHGYTIYSTFGAFYIPLLLMLVLYGRIFRAARFRIRKTVRKVEKKGAGTSLGTSSAPPPKKSLNGQPGSGDWRRCAENRAVGTPCTNGAVRQGDDEATLEVIEVHRVGNSKEHLPLPSESGSNSYAPACLERKNERNAEAKRKMALARERKTVKTLGIIMGTFILCWLPFFIVALVLPFCESSCHMPALLGAIINWLGYSNSLLNPVIYAYFNKDFQNAFKKIIKCKFCRR.

Residues 1-38 (MDVFSFGQGNNTTASQEPFGTGGNVTSISDVTFSYQVI) are Extracellular-facing. 3 N-linked (GlcNAc...) asparagine glycosylation sites follow: N10, N11, and N24. The chain crosses the membrane as a helical span at residues 39–59 (TSLLLGTLIFCAVLGNACVVA). The Cytoplasmic segment spans residues 60 to 73 (AIALERSLQNVANY). Residues 74-98 (LIGSLAVTDLMVSVLVLPMAALYQV) form a helical membrane-spanning segment. Over 99-107 (LNKWTLGQV) the chain is Extracellular. A helical membrane pass occupies residues 108–132 (TCDLFIALDVLCCTSSILHLCAIAL). An intrachain disulfide couples C109 to C187. Residues D116 and C120 each coordinate serotonin. The DRY motif; important for ligand-induced conformation changes motif lies at 133-135 (DRY). Over 133-152 (DRYWAITDPIDYVNKRTPRR) the chain is Cytoplasmic. A helical membrane pass occupies residues 153–174 (AAALISLTWLIGFLISIPPMLG). Residues 175–193 (WRTPEDRSDPDACTISKDH) are Extracellular-facing. A helical transmembrane segment spans residues 194–216 (GYTIYSTFGAFYIPLLLMLVLYG). Residues 217-346 (RIFRAARFRI…LARERKTVKT (130 aa)) lie on the Cytoplasmic side of the membrane. The tract at residues 235–261 (KKGAGTSLGTSSAPPPKKSLNGQPGSG) is disordered. The 1D-myo-inositol 4-phosphate site is built by K345, T346, and G352. A helical membrane pass occupies residues 347–370 (LGIIMGTFILCWLPFFIVALVLPF). Topologically, residues 371–378 (CESSCHMP) are extracellular. Residues 379–403 (ALLGAIINWLGYSNSLLNPVIYAYF) form a helical membrane-spanning segment. Positions 396–400 (NPVIY) match the NPxxY motif; important for ligand-induced conformation changes and signaling motif. Positions 403, 404, and 405 each coordinate 1D-myo-inositol 4-phosphate. Residues 404–422 (NKDFQNAFKKIIKCKFCRR) lie on the Cytoplasmic side of the membrane.

The protein belongs to the G-protein coupled receptor 1 family. 5-hydroxytryptamine receptor subfamily. HTR1A sub-subfamily. As to quaternary structure, heterodimer; heterodimerizes with GPER1. Interacts with YIF1B. Interacts with GPR39 and GALR1. As to expression, detected in hypothalamus, mesencephalon, amygdala, medulla, thalamus, septum and hippocampus.

It localises to the cell membrane. The protein resides in the cell projection. Its subcellular location is the dendrite. With respect to regulation, G-protein coupled receptor activity is regulated by lipids: phosphatidylinositol 4-phosphate increases HTR1A-mediated activity. G-protein coupled receptor for 5-hydroxytryptamine (serotonin). Also functions as a receptor for various drugs and psychoactive substances. Ligand binding causes a conformation change that triggers signaling via guanine nucleotide-binding proteins (G proteins) and modulates the activity of downstream effectors, such as adenylate cyclase. HTR1A is coupled to G(i)/G(o) G alpha proteins and mediates inhibitory neurotransmission: signaling inhibits adenylate cyclase activity and activates a phosphatidylinositol-calcium second messenger system that regulates the release of Ca(2+) ions from intracellular stores. Beta-arrestin family members regulate signaling by mediating both receptor desensitization and resensitization processes. This chain is 5-hydroxytryptamine receptor 1A, found in Rattus norvegicus (Rat).